A 201-amino-acid chain; its full sequence is Phosphatidylglycerophosphatase and protein-tyrosine phosphatase 1 (201 aa).

A mitochondrion-targeting transit peptide spans 1 to 27 (MAATALLEAGLARVLFYPTLLYTLFRG). The Tyrosine-protein phosphatase domain maps to 37-188 (WYHRIDPTVL…LKEFHKQITA (152 aa)). Cysteine 132 (phosphocysteine intermediate) is an active-site residue.

This sequence belongs to the protein-tyrosine phosphatase family. Non-receptor class dual specificity subfamily. As to quaternary structure, interacts with STYXL1; the interaction inhibits PTPMT1 catalytic activity.

Its subcellular location is the mitochondrion inner membrane. The enzyme catalyses a 1,2-diacyl-sn-glycero-3-phospho-(1'-sn-glycero-3'-phosphate) + H2O = a 1,2-diacyl-sn-glycero-3-phospho-(1'-sn-glycerol) + phosphate. It catalyses the reaction O-phospho-L-tyrosyl-[protein] + H2O = L-tyrosyl-[protein] + phosphate. It carries out the reaction O-phospho-L-seryl-[protein] + H2O = L-seryl-[protein] + phosphate. The catalysed reaction is O-phospho-L-threonyl-[protein] + H2O = L-threonyl-[protein] + phosphate. The enzyme catalyses 1,2-di-(9Z-octadecenoyl)-sn-glycero-3-phospho-(1'-sn-glycerol-3'-phosphate) + H2O = 1,2-di-(9Z-octadecenoyl)-sn-glycero-3-phospho-(1'-sn-glycerol) + phosphate. It catalyses the reaction 1,2-dioctanoyl-sn-glycero-3-phospho-(1D-myo-inositol-5-phosphate) + H2O = 1,2-dioctanoyl-sn-glycero-3-phospho-(1D-myo-inositol) + phosphate. It carries out the reaction a 1-acyl-2-hexanoyl-sn-glycero-3-phospho-(1D-myo-inositol-5-phosphate) + H2O = a 1-acyl-2-hexanoyl-sn-glycero-3-phospho-(1D-myo-inositol) + phosphate. The catalysed reaction is 1,2-dibutyryl-sn-glycero-3-phospho-(1D-myo-inositol-5-phosphate) + H2O = 1,2-dibutyryl-sn-glycero-3-phospho-(1D-myo-inositol) + phosphate. Its pathway is phospholipid metabolism; phosphatidylglycerol biosynthesis; phosphatidylglycerol from CDP-diacylglycerol: step 2/2. Its function is as follows. Lipid phosphatase which dephosphorylates phosphatidylglycerophosphate (PGP) to phosphatidylglycerol (PG). PGP is an essential intermediate in the biosynthetic pathway of cardiolipin, a mitochondrial-specific phospholipid regulating the membrane integrity and activities of the organelle. Has also been shown to display phosphatase activity toward phosphoprotein substrates, specifically mediates dephosphorylation of mitochondrial proteins, thereby playing an essential role in ATP production. Has probably a preference for proteins phosphorylated on Ser and/or Thr residues compared to proteins phosphorylated on Tyr residues. Probably involved in regulation of insulin secretion in pancreatic beta cells. May prevent intrinsic apoptosis, probably by regulating mitochondrial membrane integrity. This chain is Phosphatidylglycerophosphatase and protein-tyrosine phosphatase 1, found in Homo sapiens (Human).